The sequence spans 513 residues: U3 small nucleolar RNA-associated protein 15 (513 aa).

WD repeat units lie at residues 37–78 (KEHN…KTFS), 79–118 (RFKD…TILL), 124–162 (THPT…EPQL), 166–206 (GATD…STPI), 210–247 (NHDQ…KLYE), and 250–294 (NFNK…QVKF). A disordered region spans residues 332-354 (KKKEKRSSDKENAPASFNKNAKS).

As to quaternary structure, interacts with snoRNA U3. Interacts with MPP10. Component of the ribosomal small subunit (SSU) processome composed of at least 40 protein subunits and snoRNA U3. In the absence of snoRNA3, forms a complex with other t-UTPs. This complex can associate with pre-18S ribosomal RNAs.

Its subcellular location is the nucleus. It is found in the nucleolus. Involved in nucleolar processing of pre-18S ribosomal RNA. Required for optimal pre-ribosomal RNA transcription by RNA polymerase I together with a subset of U3 proteins required for transcription (t-UTPs). The protein is U3 small nucleolar RNA-associated protein 15 (UTP15) of Saccharomyces cerevisiae (strain ATCC 204508 / S288c) (Baker's yeast).